The chain runs to 153 residues: MAPGSRGERSSFRSRRGPGVPSPQPDVTMLSRLLKEHQAKQNERKELQEKRRREAITAATCLTEALVDHLNVGVAQAYMNQRKLDHEVKTLQVQAAQFAKQTGQWIGMVENFNQALKEIGDVENWARSIELDMRTIATALEYVYKGQLQSAPS.

Positions 1–11 are enriched in basic and acidic residues; that stretch reads MAPGSRGERSS. A disordered region spans residues 1 to 27; it reads MAPGSRGERSSFRSRRGPGVPSPQPDV. Residues 27-59 are a coiled coil; sequence VTMLSRLLKEHQAKQNERKELQEKRRREAITAA.

The protein belongs to the BLOC1S1 family. In terms of assembly, component of the biogenesis of lysosome-related organelles complex 1 (BLOC-1) composed of BLOC1S1, BLOC1S2, BLOC1S3, BLOC1S4, BLOC1S5, BLOC1S6, DTNBP1/BLOC1S7 and SNAPIN/BLOC1S8. Octamer composed of one copy each BLOC1S1, BLOC1S2, BLOC1S3, BLOC1S4, BLOC1S5, BLOC1S6, DTNBP1/BLOC1S7 and SNAPIN/BLOC1S8. The BLOC-1 complex associates with the AP-3 protein complex and membrane protein cargos. Component of the BLOC-one-related complex (BORC) which is composed of BLOC1S1, BLOC1S2, BORCS5, BORCS6, BORCS7, BORCS8, KXD1 and SNAPIN. Interacts with ATP5F1A and NDUFA9; involved in their acetylation on lysine residues. Interacts with KXD1.

The protein resides in the mitochondrion intermembrane space. It is found in the mitochondrion matrix. It localises to the cytoplasm. The protein localises to the cytosol. Its subcellular location is the lysosome membrane. It carries out the reaction L-lysyl-[protein] + acetyl-CoA = N(6)-acetyl-L-lysyl-[protein] + CoA + H(+). Its function is as follows. Component of the BLOC-1 complex, a complex that is required for normal biogenesis of lysosome-related organelles (LRO), such as platelet dense granules and melanosomes. In concert with the AP-3 complex, the BLOC-1 complex is required to target membrane protein cargos into vesicles assembled at cell bodies for delivery into neurites and nerve terminals. The BLOC-1 complex, in association with SNARE proteins, is also proposed to be involved in neurite extension. As part of the BORC complex may play a role in lysosomes movement and localization at the cell periphery. Associated with the cytosolic face of lysosomes, the BORC complex may recruit ARL8B and couple lysosomes to microtubule plus-end-directed kinesin motor. In terms of biological role, acts as a protein acetyltransferase. Negatively regulates aerobic respiration through mitochondrial protein lysine-acetylation. May counteract the action of the deacetylase SIRT3 by acetylating and regulating proteins of the mitochondrial respiratory chain including ATP5F1A and NDUFA9. Acts as a regulator of mTORC2 signaling in response to hypotoxic stress by mediating acetylation of RICTOR, thereby protecting RICTOR against ubiquitination and subsequent degradation by the proteasome. This Homo sapiens (Human) protein is Biogenesis of lysosome-related organelles complex 1 subunit 1 (BLOC1S1).